A 292-amino-acid chain; its full sequence is Ribosomal RNA small subunit methyltransferase A (292 aa).

Residues Asn29, Leu31, Gly56, Glu77, Asp102, and Asn127 each coordinate S-adenosyl-L-methionine.

Belongs to the class I-like SAM-binding methyltransferase superfamily. rRNA adenine N(6)-methyltransferase family. RsmA subfamily.

The protein resides in the cytoplasm. The enzyme catalyses adenosine(1518)/adenosine(1519) in 16S rRNA + 4 S-adenosyl-L-methionine = N(6)-dimethyladenosine(1518)/N(6)-dimethyladenosine(1519) in 16S rRNA + 4 S-adenosyl-L-homocysteine + 4 H(+). Specifically dimethylates two adjacent adenosines (A1518 and A1519) in the loop of a conserved hairpin near the 3'-end of 16S rRNA in the 30S particle. May play a critical role in biogenesis of 30S subunits. The polypeptide is Ribosomal RNA small subunit methyltransferase A (Bacillus pumilus (strain SAFR-032)).